An 827-amino-acid chain; its full sequence is 4-hydroxy-3-methylbut-2-enyl diphosphate reductase (827 aa).

A 4-hydroxy-3-methylbut-2-enyl diphosphate reductase region spans residues 1-284 (MEIIRAKHMG…MNIEKKVRGI (284 aa)). C12 is a [4Fe-4S] cluster binding site. Residues H40 and H79 each coordinate (2E)-4-hydroxy-3-methylbut-2-enyl diphosphate. Positions 40 and 79 each coordinate dimethylallyl diphosphate. 2 residues coordinate isopentenyl diphosphate: H40 and H79. C101 provides a ligand contact to [4Fe-4S] cluster. H129 provides a ligand contact to (2E)-4-hydroxy-3-methylbut-2-enyl diphosphate. H129 contacts dimethylallyl diphosphate. H129 contributes to the isopentenyl diphosphate binding site. E131 acts as the Proton donor in catalysis. T168 serves as a coordination point for (2E)-4-hydroxy-3-methylbut-2-enyl diphosphate. C196 lines the [4Fe-4S] cluster pocket. Residues S224, S225, N226, and S268 each coordinate (2E)-4-hydroxy-3-methylbut-2-enyl diphosphate. The dimethylallyl diphosphate site is built by S224, S225, N226, and S268. Isopentenyl diphosphate contacts are provided by S224, S225, N226, and S268. S1 motif domains lie at 477 to 545 (GQIV…LSIK), 562 to 632 (DDEI…LGIK), 649 to 716 (DTVI…GSLK), and 733 to 802 (GTTV…LSIK).

It in the N-terminal section; belongs to the IspH family. Requires [4Fe-4S] cluster as cofactor.

It carries out the reaction isopentenyl diphosphate + 2 oxidized [2Fe-2S]-[ferredoxin] + H2O = (2E)-4-hydroxy-3-methylbut-2-enyl diphosphate + 2 reduced [2Fe-2S]-[ferredoxin] + 2 H(+). The enzyme catalyses dimethylallyl diphosphate + 2 oxidized [2Fe-2S]-[ferredoxin] + H2O = (2E)-4-hydroxy-3-methylbut-2-enyl diphosphate + 2 reduced [2Fe-2S]-[ferredoxin] + 2 H(+). The protein operates within isoprenoid biosynthesis; dimethylallyl diphosphate biosynthesis; dimethylallyl diphosphate from (2E)-4-hydroxy-3-methylbutenyl diphosphate: step 1/1. It functions in the pathway isoprenoid biosynthesis; isopentenyl diphosphate biosynthesis via DXP pathway; isopentenyl diphosphate from 1-deoxy-D-xylulose 5-phosphate: step 6/6. Functionally, catalyzes the conversion of 1-hydroxy-2-methyl-2-(E)-butenyl 4-diphosphate (HMBPP) into a mixture of isopentenyl diphosphate (IPP) and dimethylallyl diphosphate (DMAPP). Acts in the terminal step of the DOXP/MEP pathway for isoprenoid precursor biosynthesis. This chain is 4-hydroxy-3-methylbut-2-enyl diphosphate reductase, found in Fusobacterium nucleatum subsp. nucleatum (strain ATCC 25586 / DSM 15643 / BCRC 10681 / CIP 101130 / JCM 8532 / KCTC 2640 / LMG 13131 / VPI 4355).